A 453-amino-acid polypeptide reads, in one-letter code: uncharacterized protein (453 aa).

In terms of biological role, the presence of the two linear plasmids, termed pGKL1 and pGKL2, in strains of Kluyveromyces lactis confers the killer phenotype to the host cell, by promoting the secretion of a toxin able to inhibit the growth of sensitive strains. This is an uncharacterized protein from Kluyveromyces lactis (strain ATCC 8585 / CBS 2359 / DSM 70799 / NBRC 1267 / NRRL Y-1140 / WM37) (Yeast).